Here is a 395-residue protein sequence, read N- to C-terminus: Serine/threonine-protein kinase BIK1 (395 aa).

A lipid anchor (N-myristoyl glycine) is attached at glycine 2. Cysteine 4 is lipidated: S-palmitoyl cysteine. A Phosphoserine modification is found at serine 26. A Glycyl lysine isopeptide (Lys-Gly) (interchain with G-Cter in ubiquitin) cross-link involves residue lysine 31. Residues serine 32, serine 33, and serine 34 each carry the phosphoserine modification. Phosphothreonine is present on threonine 35. A Glycyl lysine isopeptide (Lys-Gly) (interchain with G-Cter in ubiquitin) cross-link involves residue lysine 41. The residue at position 42 (threonine 42) is a Phosphothreonine. Serine 48 is modified (phosphoserine; by autocatalysis and BAK1). Residue threonine 50 is modified to Phosphothreonine. The residue at position 54 (serine 54) is a Phosphoserine; by autocatalysis. Residue threonine 56 is modified to Phosphothreonine; by autocatalysis. Threonine 64 is subject to Phosphothreonine. Positions 67-356 (FRPDSVIGEG…RALQQLQDNL (290 aa)) constitute a Protein kinase domain. Serine 71 is modified (phosphoserine; by autocatalysis and BAK1). 73–81 (IGEGGFGCV) contacts ATP. Serine 89 carries the post-translational modification Phosphoserine; by EFR. Residues 89–90 (ST) carry the Required for physical interaction with and phosphorylation of downstream signaling proteins (e.g. WRKY33, WRKY50, WRKY51 and WRKY57) to activate EFR-mediated immune signaling motif. Phosphothreonine; by EFR is present on threonine 90. A Glycyl lysine isopeptide (Lys-Gly) (interchain with G-Cter in ubiquitin) cross-link involves residue lysine 95. ATP is bound at residue lysine 105. Threonine 120 bears the Phosphothreonine; by EFR mark. Position 129 is a phosphoserine; by autocatalysis (serine 129). A Phosphoserine; by EFR modification is found at serine 129. Tyrosine 150 bears the Phosphotyrosine mark. Residue tyrosine 168 is modified to Phosphotyrosine; by autocatalysis. Glycyl lysine isopeptide (Lys-Gly) (interchain with G-Cter in ubiquitin) cross-links involve residues lysine 170 and lysine 186. Residue serine 193 is modified to Phosphoserine. The Proton acceptor role is filled by aspartate 202. Serine 206 is modified (phosphoserine; by autocatalysis and BAK1). Residue tyrosine 214 is modified to Phosphotyrosine; by autocatalysis. The residue at position 219 (serine 219) is a Phosphoserine. The residue at position 233 (serine 233) is a Phosphoserine; by autocatalysis. An O-UMP-serine; by Xanthomonas campestris effector XopAC/AvrAC; alternate modification is found at serine 236. Serine 236 carries the post-translational modification Phosphoserine; by autocatalysis and BAK1; alternate. Position 237 is an O-UMP-threonine; by Xanthomonas campestris effector XopAC/AvrAC; alternate (threonine 237). Phosphothreonine; by autocatalysis and BAK1; alternate is present on threonine 237. Phosphothreonine; by autocatalysis and BAK1 is present on threonine 242. Tyrosine 243 carries the phosphotyrosine modification. Position 250 is a phosphotyrosine; by autocatalysis (tyrosine 250). Serine 252 and serine 253 each carry phosphoserine; by autocatalysis. Lysine 286 is covalently cross-linked (Glycyl lysine isopeptide (Lys-Gly) (interchain with G-Cter in ubiquitin)). At threonine 314 the chain carries Phosphothreonine; by autocatalysis. Lysine 337 is covalently cross-linked (Glycyl lysine isopeptide (Lys-Gly) (interchain with G-Cter in ubiquitin)). Threonine 341 carries the phosphothreonine modification. Positions 354–365 (DNLGKPSQTNPV) are enriched in polar residues. Positions 354 to 395 (DNLGKPSQTNPVKDTKKLGFKTGTTKSSEKRFTQKPFGRHLV) are disordered. Lysine 358 is covalently cross-linked (Glycyl lysine isopeptide (Lys-Gly) (interchain with G-Cter in ubiquitin)). Serine 360 bears the Phosphoserine; by autocatalysis and BAK1 mark. Threonine 362 carries the phosphothreonine; by autocatalysis and BAK1 modification. A Glycyl lysine isopeptide (Lys-Gly) (interchain with G-Cter in ubiquitin) cross-link involves residue lysine 366. Threonine 368 carries the post-translational modification Phosphothreonine; by autocatalysis and BAK1. 2 positions are modified to phosphothreonine: threonine 375 and threonine 377.

The protein belongs to the protein kinase superfamily. Ser/Thr protein kinase family. Interacts with FLS2. Activation of FLS2 by flagellin (flg22) induces the dissociation of the complex. Interacts with BAK1. Interacts with the Xanthomonas campestris effector XopAC/AvrAC. Interacts with CPK28. Interacts with PEPR1. Interacts with PP2C38. Interacts with BRI1. Interacts with RBOHD. Binds to EFR when not phosphorylated at Ser-89 and Thr-90, in the absence of pathogen elicitor; dissociates upon pathogen-associated molecular pattern (PAMP)-triggered activation by EFR-mediated phosphorylation. Interacts directly with and phosphorylates WRKY transcription factors in the nucleus involved in the jasmonic acid (JA) and salicylic acid (SA) regulation (e.g. WRKY33, WRKY50, WRKY51 and WRKY57) to modulate defense hormones during plant immunity. Binds to ATL44/RHA3A and ATL45/RHA3B. Binds to SIK1 to be phosphorylated and stabilized. In terms of processing, phosphorylated by SIK1 to be stabilized. Phosphorylated by FLS2 and BAK1. Autophosphorylated. Autophosphorylation is reduced in presence of the Xanthomonas campestris effector XopAC/AvrAC. Phosphorylated, especially by EFR at Ser-89 and Thr-90, in response to the microbe-associated molecular pattern (MAMP) flg22. Phosphorylation in response to flg22 is abolished in presence of the Xanthomonas campestris effector XopAC/AvrAC. Phosphorylated at Ser-233, Ser-236 and Thr-237 by PEPR1. Phosphorylated at Tyr-150, Tyr-243 and Tyr-250. Tyrosine phosphorylation is required for BIK1 function in plant innate immunity. Post-translationally, uridylylated at Ser-236 and Thr-237 by the Xanthomonas campestris effector XopAC/AvrAC. This conceals conserved phosphorylation sites in the activation loop, reducing BIK1 kinase activity and consequently inhibiting downstream signaling. Monoubiquitinated by ATL44/RHA3A and ATL45/RHA3B following phosphorylation upon the recognition of microbe-associated molecular patterns (MAMPs, e.g. flg22) by pattern recognition receptors (PRRs), then released from the FLS2/BAK1 complex and internalized dynamically into endocytic compartments followed by the activation of immune signaling.

The protein localises to the cell membrane. It localises to the endosome membrane. Its subcellular location is the nucleus. The enzyme catalyses L-seryl-[protein] + ATP = O-phospho-L-seryl-[protein] + ADP + H(+). It carries out the reaction L-threonyl-[protein] + ATP = O-phospho-L-threonyl-[protein] + ADP + H(+). With respect to regulation, kinase activation is repressed by the phosphatase PP2C38. Its function is as follows. Plays a central role in immune responses. Required to activate the resistance responses to necrotrophic pathogens, including the regulation of defense hormone expression (e.g. jasmonic acid (JA) and salicylic acid (SA)). Phosphorylates FLS2 and BAK1. Involved in pathogen-associated molecular pattern (PAMP)-triggered immunity (PTI) signaling, including calcium signaling, and defense responses downstream of FLS2; upon PAMP recognition, first phosphorylated by FLS2 and SIK1 prior to being monoubiquitinated by ATL44/RHA3A and ATL45/RHA3B at the plasma membrane, then internalized dynamically into endocytic compartments together with FLS2. Acts additively with PBL1 in PTI defenses. Acts as a positive regulator of the PAMP flg22-induced increase of cytosolic calcium. Upon flg22 perception, phosphorylates and activates the calcium-permeable channel OSCA1.3, promoting stomatal closure. Phosphorylates the NADPH oxidase RBOHD at specific sites in a calcium-independent manner to enhance reactive oxygen species (ROS) generation upon flg22 perception. ROS production in response to flg22 controls stomatal movement and restriction of bacterial entry into leaf tissues. Seems not required for flg22-induced MAPK activation. Required for Pep1-induced defenses. Pep1 is an endogenous elicitor that potentiates PAMP-inducible plant responses. In association with PEPR1, acts downstream of the canonical ethylene signaling cascade to regulate ethylene responses. Involved in ethylene signaling. Destabilizes EIN3, the key transcription activator in ethylene signaling, and represses EIN3-dependent transcription. Acts as a negative regulator in brassinosteroid (BR) signaling. Functions in BR signaling by direct interaction with the BR receptor BRI1 cytosolic kinase domain. Required during SCOOP small peptides (e.g. SCOOP10 and SCOOP12) perception and signaling; receptor-like cytosolic kinases (RLCK) activated by BAK1/SERK3 and SERK4 coreceptors when associated with MIK2 upon the perception of SCOOP peptides. (Microbial infection) Xanthomonas campestris effector AvrAC/XopAC-mediated uridylylation prevents activation by phosphorylation at the same residues, thus affecting immune responses and reducing defense responses toward X.campestris, mediating avrAC/XopAC virulence functions. The chain is Serine/threonine-protein kinase BIK1 from Arabidopsis thaliana (Mouse-ear cress).